A 308-amino-acid chain; its full sequence is MTLEVTFLGTSGAVPTTERNPSSVFVRRNGDAFLFDAGEATQRQMMRYKTGFGVSDVFITHGHGDHVFGLPGLVHTWDFNDRTDPLTIHVPRGLRGDIEDLVFSAGGDVGYPVRITEATPGAVVRSHDDYEVRAFETAHSTASVGYALVEDDRTGRFDRARAEELGVPVGPKFSTLHDGQPVELDDGTVVSPEQVVGDPRPGRTLVYTGDTRPHDPVVSAAEDADLLIHDATFANDASERAAETGHSTAGEAADVATEAGAKALALTHVSSRYAGDASEISAGASGFDGEAFVAHDGLTHEIPFPDAD.

The Zn(2+) site is built by His-61, His-63, Asp-65, His-66, His-139, Asp-210, and His-268. Asp-65 (proton acceptor) is an active-site residue.

It belongs to the RNase Z family. Homodimer. Zn(2+) serves as cofactor.

It catalyses the reaction Endonucleolytic cleavage of RNA, removing extra 3' nucleotides from tRNA precursor, generating 3' termini of tRNAs. A 3'-hydroxy group is left at the tRNA terminus and a 5'-phosphoryl group is left at the trailer molecule.. Zinc phosphodiesterase, which displays some tRNA 3'-processing endonuclease activity. Probably involved in tRNA maturation, by removing a 3'-trailer from precursor tRNA. This Halobacterium salinarum (strain ATCC 700922 / JCM 11081 / NRC-1) (Halobacterium halobium) protein is Ribonuclease Z.